A 518-amino-acid polypeptide reads, in one-letter code: Suppressor of hairless homolog (518 aa).

A disordered region spans residues 22–59 (ETDQQRSHVKERVNGTPNQNGGTSTSSKPRSVFENRPP). Residues 24–34 (DQQRSHVKERV) show a composition bias toward basic and acidic residues. Residues 36–50 (GTPNQNGGTSTSSKP) are compositionally biased toward polar residues. 3 DNA-binding regions span residues 89–96 (KSYGNEKR), 223–232 (RLRSQTVSTR), and 296–328 (RKVDKQTAILNADDPVSQLHKCAFYLKDSERMY). The 91-residue stretch at 386–476 (PVVHSLQLNG…YPTNLTFTFT (91 aa)) folds into the IPT/TIG domain.

It belongs to the Su(H) family. In terms of assembly, interacts with activated Notch proteins.

It localises to the nucleus. In terms of biological role, transcriptional regulator that plays a central role in Notch signaling, a signaling pathway involved in cell-cell communication that regulates a broad spectrum of cell-fate determinations. Acts as a transcriptional repressor when it is not associated with Notch proteins. When associated with some Notch protein, it acts as a transcriptional activator that activates transcription of Notch target genes. The protein is Suppressor of hairless homolog (RBP-JK) of Halocynthia roretzi (Sea squirt).